An 812-amino-acid chain; its full sequence is Lon protease (812 aa).

The Lon N-terminal domain occupies 22 to 215; the sequence is YAVLPLRDIV…KALSFMEAEI (194 aa). 367–374 is an ATP binding site; sequence GPPGVGKT. The Lon proteolytic domain maps to 602 to 783; sequence EDQVGVVTGL…GEVLKHTLVR (182 aa). Active-site residues include Ser689 and Lys732. The disordered stretch occupies residues 787 to 812; sequence PIEWTEQENPTAVPPVEDEAGASLAH.

The protein belongs to the peptidase S16 family. In terms of assembly, homohexamer. Organized in a ring with a central cavity.

It localises to the cytoplasm. The enzyme catalyses Hydrolysis of proteins in presence of ATP.. Functionally, ATP-dependent serine protease that mediates the selective degradation of mutant and abnormal proteins as well as certain short-lived regulatory proteins. Required for cellular homeostasis and for survival from DNA damage and developmental changes induced by stress. Degrades polypeptides processively to yield small peptide fragments that are 5 to 10 amino acids long. Binds to DNA in a double-stranded, site-specific manner. This chain is Lon protease, found in Brucella suis biovar 1 (strain 1330).